The primary structure comprises 368 residues: Quinolinate synthase (368 aa).

Iminosuccinate contacts are provided by His46 and Ser63. Residue Cys110 participates in [4Fe-4S] cluster binding. Iminosuccinate is bound by residues 141 to 143 (YVN) and Ser162. A [4Fe-4S] cluster-binding site is contributed by Cys230. Residues 256–258 (HPE) and Thr273 contribute to the iminosuccinate site. Cys320 lines the [4Fe-4S] cluster pocket.

Belongs to the quinolinate synthase family. Type 3 subfamily. [4Fe-4S] cluster serves as cofactor.

It localises to the cytoplasm. The catalysed reaction is iminosuccinate + dihydroxyacetone phosphate = quinolinate + phosphate + 2 H2O + H(+). It participates in cofactor biosynthesis; NAD(+) biosynthesis; quinolinate from iminoaspartate: step 1/1. Catalyzes the condensation of iminoaspartate with dihydroxyacetone phosphate to form quinolinate. The protein is Quinolinate synthase of Bacillus mycoides (strain KBAB4) (Bacillus weihenstephanensis).